A 305-amino-acid chain; its full sequence is tRNA pseudouridine synthase B (305 aa).

The active-site Nucleophile is Asp-48.

This sequence belongs to the pseudouridine synthase TruB family. Type 1 subfamily.

The catalysed reaction is uridine(55) in tRNA = pseudouridine(55) in tRNA. Responsible for synthesis of pseudouridine from uracil-55 in the psi GC loop of transfer RNAs. This Pseudomonas fluorescens (strain ATCC BAA-477 / NRRL B-23932 / Pf-5) protein is tRNA pseudouridine synthase B.